The chain runs to 148 residues: Large-conductance mechanosensitive channel (148 aa).

The next 2 helical transmembrane spans lie at 14–34 (VVDMAVGIIIGAAFTTIINTL) and 85–105 (GIFVNACISFLIVTFVMFLSV).

The protein belongs to the MscL family. As to quaternary structure, homopentamer.

It localises to the cell inner membrane. Its function is as follows. Channel that opens in response to stretch forces in the membrane lipid bilayer. May participate in the regulation of osmotic pressure changes within the cell. The protein is Large-conductance mechanosensitive channel of Chlorobium phaeobacteroides (strain DSM 266 / SMG 266 / 2430).